Reading from the N-terminus, the 318-residue chain is Ribosomal RNA small subunit methyltransferase H (318 aa).

Residues glycine 37–histidine 39, aspartate 57, phenylalanine 83, aspartate 104, and glutamine 111 each bind S-adenosyl-L-methionine.

It belongs to the methyltransferase superfamily. RsmH family.

The protein localises to the cytoplasm. The enzyme catalyses cytidine(1402) in 16S rRNA + S-adenosyl-L-methionine = N(4)-methylcytidine(1402) in 16S rRNA + S-adenosyl-L-homocysteine + H(+). In terms of biological role, specifically methylates the N4 position of cytidine in position 1402 (C1402) of 16S rRNA. The protein is Ribosomal RNA small subunit methyltransferase H of Neisseria gonorrhoeae (strain ATCC 700825 / FA 1090).